A 338-amino-acid chain; its full sequence is DNA-directed RNA polymerase subunit alpha (338 aa).

Residues 1 to 234 (MIHKNWAELI…DQLSIFVNFE (234 aa)) are alpha N-terminal domain (alpha-NTD). Residues 250-338 (FNPLLLKKVD…DLAKRFEDQF (89 aa)) are alpha C-terminal domain (alpha-CTD).

The protein belongs to the RNA polymerase alpha chain family. In terms of assembly, homodimer. The RNAP catalytic core consists of 2 alpha, 1 beta, 1 beta' and 1 omega subunit. When a sigma factor is associated with the core the holoenzyme is formed, which can initiate transcription.

It catalyses the reaction RNA(n) + a ribonucleoside 5'-triphosphate = RNA(n+1) + diphosphate. DNA-dependent RNA polymerase catalyzes the transcription of DNA into RNA using the four ribonucleoside triphosphates as substrates. The sequence is that of DNA-directed RNA polymerase subunit alpha from Cereibacter sphaeroides (strain ATCC 17029 / ATH 2.4.9) (Rhodobacter sphaeroides).